Reading from the N-terminus, the 514-residue chain is Serine--tRNA ligase, cytoplasmic (514 aa).

Methionine 1 is modified (N-acetylmethionine). Residues 9–61 are interaction with tRNA; it reads RVDKGGDPALIRESQEKRFKDPGLVDQLVKADSEWRRCRFRADNLNKLKNLCS. Position 241 is a phosphoserine (serine 241). Threonine 271 and arginine 302 together coordinate L-serine. ATP-binding positions include 302–304 and 318–321; these read RQE and VHQF. Lysine 323 is modified (N6-acetyllysine). Residue glutamate 325 participates in L-serine binding. 391 to 394 serves as a coordination point for ATP; that stretch reads ELVS. Asparagine 427 contributes to the L-serine binding site. Residues 475-514 are disordered; that stretch reads PIDQEPSKKQKKQHEGSKKKGAARDVALESQLQNMEVTDA. Basic and acidic residues predominate over residues 479 to 501; the sequence is EPSKKQKKQHEGSKKKGAARDVA. The short motif at 482 to 494 is the Nuclear localization signal element; that stretch reads KKQKKQHEGSKKK. A compositionally biased stretch (polar residues) spans 504-514; that stretch reads SQLQNMEVTDA.

This sequence belongs to the class-II aminoacyl-tRNA synthetase family. Type-1 seryl-tRNA synthetase subfamily. In terms of assembly, homodimer. The tRNA molecule may bind across the dimer. Interacts with SIRT2. Interacts with METTL6; interaction is required for the tRNA N(3)-methylcytidine methyltransferase activity of METTL6.

The protein localises to the cytoplasm. It localises to the nucleus. It carries out the reaction tRNA(Ser) + L-serine + ATP = L-seryl-tRNA(Ser) + AMP + diphosphate + H(+). The enzyme catalyses tRNA(Sec) + L-serine + ATP = L-seryl-tRNA(Sec) + AMP + diphosphate + H(+). Its pathway is aminoacyl-tRNA biosynthesis; selenocysteinyl-tRNA(Sec) biosynthesis; L-seryl-tRNA(Sec) from L-serine and tRNA(Sec): step 1/1. In terms of biological role, catalyzes the attachment of serine to tRNA(Ser) in a two-step reaction: serine is first activated by ATP to form Ser-AMP and then transferred to the acceptor end of tRNA(Ser). Is probably also able to aminoacylate tRNA(Sec) with serine, to form the misacylated tRNA L-seryl-tRNA(Sec), which will be further converted into selenocysteinyl-tRNA(Sec). In the nucleus, binds to the VEGFA core promoter and prevents MYC binding and transcriptional activation by MYC. Recruits SIRT2 to the VEGFA promoter, promoting deacetylation of histone H4 at 'Lys-16' (H4K16). Thereby, inhibits the production of VEGFA and sprouting angiogenesis mediated by VEGFA. This chain is Serine--tRNA ligase, cytoplasmic (SARS1), found in Bos taurus (Bovine).